The following is an 85-amino-acid chain: Beta-insect depressant toxin Lqh-dprIT3g (85 aa).

A signal peptide spans 1-21 (MKLLLLLTISASMLIEGLVNA). One can recognise an LCN-type CS-alpha/beta domain in the interval 22–82 (DGYIRGGDGC…EWDYETDTCG (61 aa)). Intrachain disulfides connect cysteine 31/cysteine 81, cysteine 35/cysteine 56, cysteine 42/cysteine 63, and cysteine 46/cysteine 65. Glycine 82 is subject to Glycine amide.

This sequence belongs to the long (4 C-C) scorpion toxin superfamily. Sodium channel inhibitor family. Beta subfamily. As to expression, expressed by the venom gland.

Its subcellular location is the secreted. Depressant insect beta-toxins cause a transient contraction paralysis followed by a slow flaccid paralysis. They bind voltage-independently at site-4 of sodium channels (Nav) and block action potentials, primarily by depolarizing the axonal membrane and suppressing the sodium current. This depressant toxin is active only on insects. It is found in a relatively small amount in the venom. The sequence is that of Beta-insect depressant toxin Lqh-dprIT3g from Leiurus hebraeus (Hebrew deathstalker scorpion).